Reading from the N-terminus, the 83-residue chain is Ardiscretin (83 aa).

Residues M1 to S20 form the signal peptide. In terms of domain architecture, LCN-type CS-alpha/beta spans K21 to G82. 4 disulfides stabilise this stretch: C31-C81, C35-C57, C43-C62, and C47-C64. C81 bears the Cysteine amide mark.

Expressed by the venom gland.

The protein localises to the secreted. Functionally, inhibits the sodium (Nav) currents in an apparent irreversible manner. Produces small depolarization and induces repetitive firing in squid axons. Is specific for arthropods (crickets, triatomides, crabs and squids), but is non-toxic to mice. Shows antibacterial activity against both Gram-positive and Gram-negative bacteria. The chain is Ardiscretin from Tityus discrepans (Venezuelan scorpion).